The sequence spans 312 residues: MIEFEKPNITVVDQEEAYGKFVVEPLERGFGTTLGNSLRRVLLTSIPGTALSYIQIDGVLHEFSTIPGVREDVTKIILNLKKLELKSLSDEEKIAEIDVTGPAIVTAADLKVDSDIEVLNPDQYICSIADGGHLHMNVAIKTGRGYVPASENKTDDMPIGVIPVDSLFSPIKKVNYQVESARVGKRDDYDKLTLEIWTDGSITPNDALSFAAKILVEHFKVFMSTDMDAQFDDVMVEKEDDKNEKKLEMTIEELDLSVRSYNCLKRAGINTVQELTDKSEADMMRVRNLGRKSLEEVKNKLADLGLSLRQDD.

Positions 1–226 are alpha N-terminal domain (alpha-NTD); it reads MIEFEKPNIT…EHFKVFMSTD (226 aa). Residues 243-312 form an alpha C-terminal domain (alpha-CTD) region; the sequence is NEKKLEMTIE…DLGLSLRQDD (70 aa).

Belongs to the RNA polymerase alpha chain family. In terms of assembly, homodimer. The RNAP catalytic core consists of 2 alpha, 1 beta, 1 beta' and 1 omega subunit. When a sigma factor is associated with the core the holoenzyme is formed, which can initiate transcription.

It carries out the reaction RNA(n) + a ribonucleoside 5'-triphosphate = RNA(n+1) + diphosphate. DNA-dependent RNA polymerase catalyzes the transcription of DNA into RNA using the four ribonucleoside triphosphates as substrates. The chain is DNA-directed RNA polymerase subunit alpha from Lactobacillus johnsonii (strain CNCM I-12250 / La1 / NCC 533).